The chain runs to 469 residues: MPKYTPEEVLDLIQKEGVQYVDLRFSDPFGQWQHLTIPAYEISKETFEVGRGFDGSSIRGWQSINESDMLAKPDPNTAFIDPFIEPKTLVMICDIYDPVTGERYGRDTRYIAQKAEQYLKQTGIGDTAYFGPEAEFFIFDSVEFGTAANYAFWRVDSEEGWWNREVPSSGYKIPHKRGYFPAPPVDKMMQLRNEMVSIMSDLGIIVELHHHEVATAGQGEIDIRYDSLLNQADKLFLYKYIVRMVAAKHGKYATFMAKVLPNDNGSGMHTHFSIWKNGENLFAGSEYAGLSKTALYAIGGILKHGPAIAAFTNPTVNSYHRLVPGYEAPVRLAYSARNRSAAIRIPMYSQNPKAKRIEVRFPDATSNPYLAFAAILMAAIDGIENEIDPGEPFDKDIYSLPPEELEGIPQLPGSLEEALKALEEDYEFLLKGNVFTEEFIQLWIESKRAEIDELRFIPHPKEFELYWDI.

The GS beta-grasp domain maps to 16–100 (EGVQYVDLRF…MICDIYDPVT (85 aa)). A GS catalytic domain is found at 108 to 469 (TRYIAQKAEQ…PKEFELYWDI (362 aa)). Positions 133 and 135 each coordinate Mg(2+). Glutamate 207 contacts ATP. Mg(2+) is bound by residues glutamate 212 and glutamate 220. L-glutamate-binding positions include 264 to 265 (NG) and glycine 265. Histidine 269 is a Mg(2+) binding site. Residues 271-273 (HFS) and serine 273 contribute to the ATP site. Residues arginine 321, glutamate 327, and arginine 339 each coordinate L-glutamate. Residues arginine 339, arginine 344, and lysine 353 each coordinate ATP. Glutamate 358 contacts Mg(2+). Arginine 360 is an L-glutamate binding site. At tyrosine 398 the chain carries O-AMP-tyrosine.

It belongs to the glutamine synthetase family. As to quaternary structure, oligomer of 12 subunits arranged in the form of two hexagons. The cofactor is Mg(2+).

The protein localises to the cytoplasm. The enzyme catalyses L-glutamate + NH4(+) + ATP = L-glutamine + ADP + phosphate + H(+). The activity of this enzyme could be controlled by adenylation under conditions of abundant glutamine. In terms of biological role, catalyzes the ATP-dependent biosynthesis of glutamine from glutamate and ammonia. The polypeptide is Glutamine synthetase (Aquifex aeolicus (strain VF5)).